A 171-amino-acid polypeptide reads, in one-letter code: Large ribosomal subunit protein bL9 (171 aa).

Belongs to the bacterial ribosomal protein bL9 family.

Functionally, binds to the 23S rRNA. The chain is Large ribosomal subunit protein bL9 from Rickettsia typhi (strain ATCC VR-144 / Wilmington).